We begin with the raw amino-acid sequence, 430 residues long: Tol-Pal system protein TolB (430 aa).

The N-terminal stretch at 1–19 (MKKQIFFTLILLISGLARA) is a signal peptide.

The protein belongs to the TolB family. As to quaternary structure, the Tol-Pal system is composed of five core proteins: the inner membrane proteins TolA, TolQ and TolR, the periplasmic protein TolB and the outer membrane protein Pal. They form a network linking the inner and outer membranes and the peptidoglycan layer.

Its subcellular location is the periplasm. Functionally, part of the Tol-Pal system, which plays a role in outer membrane invagination during cell division and is important for maintaining outer membrane integrity. The polypeptide is Tol-Pal system protein TolB (Hahella chejuensis (strain KCTC 2396)).